An 88-amino-acid polypeptide reads, in one-letter code: Large ribosomal subunit protein bL27 (88 aa).

A disordered region spans residues 1–21; that stretch reads MAHKKGVGSSRNGRDSQPKML.

The protein belongs to the bacterial ribosomal protein bL27 family.

In Pelotomaculum thermopropionicum (strain DSM 13744 / JCM 10971 / SI), this protein is Large ribosomal subunit protein bL27.